A 425-amino-acid chain; its full sequence is Serine--tRNA ligase (425 aa).

Position 233–235 (233–235 (TAE)) interacts with L-serine. 264 to 266 (RRE) serves as a coordination point for ATP. An L-serine-binding site is contributed by E287. ATP is bound at residue 351–354 (EISS). S385 provides a ligand contact to L-serine.

It belongs to the class-II aminoacyl-tRNA synthetase family. Type-1 seryl-tRNA synthetase subfamily. Homodimer. The tRNA molecule binds across the dimer.

The protein resides in the cytoplasm. It catalyses the reaction tRNA(Ser) + L-serine + ATP = L-seryl-tRNA(Ser) + AMP + diphosphate + H(+). It carries out the reaction tRNA(Sec) + L-serine + ATP = L-seryl-tRNA(Sec) + AMP + diphosphate + H(+). The protein operates within aminoacyl-tRNA biosynthesis; selenocysteinyl-tRNA(Sec) biosynthesis; L-seryl-tRNA(Sec) from L-serine and tRNA(Sec): step 1/1. Its function is as follows. Catalyzes the attachment of serine to tRNA(Ser). Is also able to aminoacylate tRNA(Sec) with serine, to form the misacylated tRNA L-seryl-tRNA(Sec), which will be further converted into selenocysteinyl-tRNA(Sec). This chain is Serine--tRNA ligase, found in Synechococcus sp. (strain CC9902).